We begin with the raw amino-acid sequence, 449 residues long: Pectate lyase L (449 aa).

Residues 1-26 form the signal peptide; it reads MFKRNDRSKNGFNALRLGVSFVLASS. Cys-27 carries the N-palmitoyl cysteine lipid modification. Residue Cys-27 is the site of S-diacylglycerol cysteine attachment. PbH1 repeat units lie at residues 158 to 179, 180 to 202, 213 to 242, 245 to 267, 274 to 308, 336 to 358, and 359 to 391; these read GDFWLVKGLEVKGAGDNGIYIG, GSNNRIENVETHHNRDTGLQLGR, PANNLILNSYSHDNADPDNGEDADGFAAKL, GSGNVFDNCLAAYNVDDGWDLYS, IGAVTILNSVAHHNGQTSDGTSTANSDGNGFKLGG, PGTITLTNNTSWDNGQSNFAFDK, and GEHVFINNLSFEGTASDKTSGTDQDNSNVWWKN. The Ca(2+) site is built by Asp-236, Asp-260, Asp-261, and Asp-264. Catalysis depends on Lys-305, which acts as the Proton acceptor.

The protein belongs to the polysaccharide lyase 9 family. Ca(2+) is required as a cofactor.

The protein localises to the secreted. It carries out the reaction Eliminative cleavage of (1-&gt;4)-alpha-D-galacturonan to give oligosaccharides with 4-deoxy-alpha-D-galact-4-enuronosyl groups at their non-reducing ends.. Its activity is regulated as follows. Activated in presence of the surfactant polysorbate 20, while inhibited in the presence of polysorbate 40, polysorbate 60, polysorbate 80, Triton X-100 and sodium dodecyl sulfate. Inhibited by the metal chelator ethylenediaminetetraacetic acid (EDTA). Inhibited by iron and cobalt ions. Its function is as follows. Presents an endo-cleaving activity on the homogalacturonan (HG) region in pectin with a preference for low- or unmethylated pectin. The sequence is that of Pectate lyase L from Paenibacillus polymyxa (strain SC2) (Bacillus polymyxa).